Consider the following 102-residue polypeptide: Small ribosomal subunit protein uS10 (102 aa).

The protein belongs to the universal ribosomal protein uS10 family. As to quaternary structure, part of the 30S ribosomal subunit.

In terms of biological role, involved in the binding of tRNA to the ribosomes. In Agrobacterium fabrum (strain C58 / ATCC 33970) (Agrobacterium tumefaciens (strain C58)), this protein is Small ribosomal subunit protein uS10.